The sequence spans 671 residues: DNA ligase (671 aa).

NAD(+) is bound by residues 37–41 (DIEYD), 86–87 (SL), and Glu-117. The active-site N6-AMP-lysine intermediate is Lys-119. NAD(+) is bound by residues Arg-140, Glu-177, Lys-295, and Lys-319. 4 residues coordinate Zn(2+): Cys-413, Cys-416, Cys-431, and Cys-437. In terms of domain architecture, BRCT spans 594-671 (IISAAVFGKT…DEEEMLNLLK (78 aa)).

It belongs to the NAD-dependent DNA ligase family. LigA subfamily. It depends on Mg(2+) as a cofactor. Mn(2+) serves as cofactor.

The catalysed reaction is NAD(+) + (deoxyribonucleotide)n-3'-hydroxyl + 5'-phospho-(deoxyribonucleotide)m = (deoxyribonucleotide)n+m + AMP + beta-nicotinamide D-nucleotide.. Its function is as follows. DNA ligase that catalyzes the formation of phosphodiester linkages between 5'-phosphoryl and 3'-hydroxyl groups in double-stranded DNA using NAD as a coenzyme and as the energy source for the reaction. It is essential for DNA replication and repair of damaged DNA. The chain is DNA ligase from Polynucleobacter asymbioticus (strain DSM 18221 / CIP 109841 / QLW-P1DMWA-1) (Polynucleobacter necessarius subsp. asymbioticus).